We begin with the raw amino-acid sequence, 720 residues long: Probable ATP-dependent RNA helicase DHX35 (720 aa).

The Helicase ATP-binding domain occupies 64–229 (LYLIENYQTV…FNQNETSDPA (166 aa)). ATP is bound at residue 77 to 84 (GETGCGKS). The DEAH box motif lies at 176-179 (DEAH). A Helicase C-terminal domain is found at 261–438 (TVETVVKIHQ…PVILQLKALG (178 aa)).

It belongs to the DEAD box helicase family. DEAH subfamily. In terms of assembly, identified in the spliceosome C complex.

The catalysed reaction is ATP + H2O = ADP + phosphate + H(+). Its function is as follows. May be involved in pre-mRNA splicing. This Pongo abelii (Sumatran orangutan) protein is Probable ATP-dependent RNA helicase DHX35 (DHX35).